A 291-amino-acid chain; its full sequence is Phytanoyl-CoA dioxygenase domain-containing protein 1 (291 aa).

Residues K102, M141, 156–158, and W174 each bind 2-oxoglutarate; that span reads HQD. Residues H156 and D158 each coordinate Fe cation. H246 serves as a coordination point for Fe cation. Positions 248 and 257 each coordinate 2-oxoglutarate.

Belongs to the PhyH family. PHYHD1 subfamily. Fe cation serves as cofactor.

Functionally, 2-oxoglutarate(2OG)-dependent dioxygenase that catalyzes the conversion of 2-oxoglutarate to succinate and CO(2) in an iron-dependent manner. However, does not couple 2OG turnover to the hydroxylation of acyl-coenzyme A derivatives, implying that it is not directly involved in phytanoyl coenzyme-A metabolism. Does not show detectable activity towards fatty acid CoA thioesters. This is Phytanoyl-CoA dioxygenase domain-containing protein 1 (phyhd1) from Danio rerio (Zebrafish).